A 103-amino-acid chain; its full sequence is Histone H4 (103 aa).

Gly residues predominate over residues 1 to 14 (MSGRGKGGKGLGKG). Positions 1-20 (MSGRGKGGKGLGKGGAKRHR) are disordered. N-acetylserine is present on serine 2. N6-acetyllysine is present on lysine 17. Residues 17–21 (KRHRR) mediate DNA binding. An N6-methylated lysine modification is found at lysine 80.

This sequence belongs to the histone H4 family. In terms of assembly, the nucleosome is a histone octamer containing two molecules each of H2A, H2B, H3 and H4 assembled in one H3-H4 heterotetramer and two H2A-H2B heterodimers. The octamer wraps approximately 147 bp of DNA.

It is found in the nucleus. The protein resides in the chromosome. In terms of biological role, core component of nucleosome. Nucleosomes wrap and compact DNA into chromatin, limiting DNA accessibility to the cellular machineries which require DNA as a template. Histones thereby play a central role in transcription regulation, DNA repair, DNA replication and chromosomal stability. DNA accessibility is regulated via a complex set of post-translational modifications of histones, also called histone code, and nucleosome remodeling. This is Histone H4 from Olisthodiscus luteus (Marine phytoflagellate).